The sequence spans 66 residues: Small ribosomal subunit protein bS21 (66 aa).

Belongs to the bacterial ribosomal protein bS21 family.

The polypeptide is Small ribosomal subunit protein bS21 (Bdellovibrio bacteriovorus (strain ATCC 15356 / DSM 50701 / NCIMB 9529 / HD100)).